A 469-amino-acid polypeptide reads, in one-letter code: 3-isopropylmalate dehydratase large subunit (469 aa).

[4Fe-4S] cluster contacts are provided by C347, C408, and C411.

It belongs to the aconitase/IPM isomerase family. LeuC type 1 subfamily. In terms of assembly, heterodimer of LeuC and LeuD. [4Fe-4S] cluster is required as a cofactor.

It carries out the reaction (2R,3S)-3-isopropylmalate = (2S)-2-isopropylmalate. It functions in the pathway amino-acid biosynthesis; L-leucine biosynthesis; L-leucine from 3-methyl-2-oxobutanoate: step 2/4. Catalyzes the isomerization between 2-isopropylmalate and 3-isopropylmalate, via the formation of 2-isopropylmaleate. This Haemophilus influenzae (strain PittEE) protein is 3-isopropylmalate dehydratase large subunit.